A 389-amino-acid polypeptide reads, in one-letter code: Oxysterol-binding protein 1 (389 aa).

Coiled coils occupy residues methionine 1–alanine 31 and lysine 340–lysine 371. The disordered stretch occupies residues methionine 1–aspartate 43.

This sequence belongs to the OSBP family. Interacts with dstC.

The protein localises to the cytoplasm. Its function is as follows. May play a role in the regulation of the slug-fruiting body switch. The sequence is that of Oxysterol-binding protein 1 (osbA) from Dictyostelium discoideum (Social amoeba).